We begin with the raw amino-acid sequence, 886 residues long: Alanine--tRNA ligase (886 aa).

Zn(2+) is bound by residues His-564, His-568, Cys-666, and His-670.

Belongs to the class-II aminoacyl-tRNA synthetase family. Zn(2+) serves as cofactor.

The protein resides in the cytoplasm. It carries out the reaction tRNA(Ala) + L-alanine + ATP = L-alanyl-tRNA(Ala) + AMP + diphosphate. Its function is as follows. Catalyzes the attachment of alanine to tRNA(Ala) in a two-step reaction: alanine is first activated by ATP to form Ala-AMP and then transferred to the acceptor end of tRNA(Ala). Also edits incorrectly charged Ser-tRNA(Ala) and Gly-tRNA(Ala) via its editing domain. The protein is Alanine--tRNA ligase of Prochlorococcus marinus subsp. pastoris (strain CCMP1986 / NIES-2087 / MED4).